A 249-amino-acid chain; its full sequence is Vitamin B12 import ATP-binding protein BtuD (249 aa).

Residues 1 to 233 (MSIVMQLQDV…PNLAQAYGMN (233 aa)) form the ABC transporter domain. 33 to 40 (GPNGAGKS) contributes to the ATP binding site.

This sequence belongs to the ABC transporter superfamily. Vitamin B12 importer (TC 3.A.1.13.1) family. The complex is composed of two ATP-binding proteins (BtuD), two transmembrane proteins (BtuC) and a solute-binding protein (BtuF).

Its subcellular location is the cell inner membrane. It catalyses the reaction an R-cob(III)alamin(out) + ATP + H2O = an R-cob(III)alamin(in) + ADP + phosphate + H(+). In terms of biological role, part of the ABC transporter complex BtuCDF involved in vitamin B12 import. Responsible for energy coupling to the transport system. In Escherichia coli (strain K12 / DH10B), this protein is Vitamin B12 import ATP-binding protein BtuD.